We begin with the raw amino-acid sequence, 120 residues long: Seripauperin-8 (120 aa).

A signal peptide spans 1 to 20 (MVKLTSIAAGVAAIAATASA).

This sequence belongs to the SRP1/TIP1 family. Seripauperin subfamily.

This chain is Seripauperin-8 (PAU8), found in Saccharomyces cerevisiae (strain ATCC 204508 / S288c) (Baker's yeast).